The following is a 338-amino-acid chain: Envelope glycoprotein K (338 aa).

Residues 1 to 30 (MLAVRSLQHLSTVVLITAYGLVLVWYTVFG) form the signal peptide. Residues 31-121 (ASPLHRCIYA…VNCLETLWYT (91 aa)) are Extracellular-facing. Residues 31-121 (ASPLHRCIYA…VNCLETLWYT (91 aa)) are involved in fusion. Residues Asn48 and Asn58 are each glycosylated (N-linked (GlcNAc...) asparagine; by host). Residues 122–140 (RVRLVVVGWFLYLAFVALH) traverse the membrane as a helical segment. The Cytoplasmic segment spans residues 141–212 (QRRCMFGVVS…DPVTFLYHRP (72 aa)). Residues 213–233 (AIGVIVGCELMLRFVAVGLIV) form a helical membrane-spanning segment. The Extracellular segment spans residues 234–243 (GTAFISRGAC). A helical transmembrane segment spans residues 244–264 (AITYPLFLTITTWCFVSTIGL). At 265–301 (TELYCILRRGPAPKNADKAAAPGRSKGLSGVCGRCCS) the chain is on the cytoplasmic side. Positions 265–301 (TELYCILRRGPAPKNADKAAAPGRSKGLSGVCGRCCS) are interaction with UL20. The helical transmembrane segment at 302–322 (IILSGIAVRLCYIAVVAGVVL) threads the bilayer. Topologically, residues 323–338 (VALHYEQEIQRRLFDV) are extracellular.

The protein belongs to the alphaherpesvirinae glycoprotein K family. In terms of assembly, interacts (via UL20 interaction region) with protein UL20 (via N-terminus); this interaction probably plays a role in the coordinate transport of protein UL20 and gK to the trans-Golgi network (TGN), and is required for the cell surface expression of gK. Post-translationally, N-glycosylated.

Its subcellular location is the host cell membrane. It localises to the host endosome membrane. The protein localises to the host Golgi apparatus membrane. Functionally, glycoprotein that probably modulates membrane fusion events during secondary envelopment of cytoplasmic capsids that bud into specific trans-Golgi network (TGN)-derived membranes. Also plays a role, together with gB, in virus-induced cell-to-cell fusion (syncytia formation). Seems to block fusion of virions with infected-cell membranes. The polypeptide is Envelope glycoprotein K (gK) (Homo sapiens (Human)).